A 601-amino-acid polypeptide reads, in one-letter code: ATP-dependent lipid A-core flippase (601 aa).

6 helical membrane-spanning segments follow: residues 35–55 (FAVA…LAFL), 77–97 (LAII…AILM), 150–170 (AVTS…VIFY), 173–193 (WQLA…IAKF), 263–283 (MEFL…YQVI), and 286–306 (SSTP…YEPV). Positions 36-318 (AVAMVCMLIA…LTNVNNTIQQ (283 aa)) constitute an ABC transmembrane type-1 domain. The 234-residue stretch at 352–585 (IEIRNISFAY…RGEYYKLHQL (234 aa)) folds into the ABC transporter domain. 384-391 (GMSGGGKT) contacts ATP.

Belongs to the ABC transporter superfamily. Lipid exporter (TC 3.A.1.106) family. In terms of assembly, homodimer.

It is found in the cell inner membrane. It catalyses the reaction ATP + H2O + lipid A-core oligosaccharideSide 1 = ADP + phosphate + lipid A-core oligosaccharideSide 2.. Involved in lipopolysaccharide (LPS) biosynthesis. Translocates lipid A-core from the inner to the outer leaflet of the inner membrane. Transmembrane domains (TMD) form a pore in the inner membrane and the ATP-binding domain (NBD) is responsible for energy generation. This Syntrophus aciditrophicus (strain SB) protein is ATP-dependent lipid A-core flippase.